A 160-amino-acid polypeptide reads, in one-letter code: Transcription antitermination protein NusB (160 aa).

It belongs to the NusB family.

Its function is as follows. Involved in transcription antitermination. Required for transcription of ribosomal RNA (rRNA) genes. Binds specifically to the boxA antiterminator sequence of the ribosomal RNA (rrn) operons. The chain is Transcription antitermination protein NusB from Gluconobacter oxydans (strain 621H) (Gluconobacter suboxydans).